The chain runs to 267 residues: MQEGGLPRAKKRFGQNFLVQPQIVERIVAAIRPASGDHLVEIGPGPGALTKSLLRLLPQFTVVELDRDMIAGLRALAPPEQLRVLQADALEVDFAALAGAGNALRIVGNLPYNVATPLIFHILEHAEQVRDMHFMLQKEVVDRVVAMPGSKAYGRLSVMIQAYCAVESLFTVAPGNFFPVPKVDSAFMRLIPHRPGLLPPHLQAPFARIVATSFAQRRKTLANNLRGILSADDLRGLQIDPGSRAETLDQAAFFRLAEATVEQGNRS.

Positions 16, 18, 43, 64, 88, and 109 each coordinate S-adenosyl-L-methionine.

Belongs to the class I-like SAM-binding methyltransferase superfamily. rRNA adenine N(6)-methyltransferase family. RsmA subfamily.

The protein resides in the cytoplasm. The enzyme catalyses adenosine(1518)/adenosine(1519) in 16S rRNA + 4 S-adenosyl-L-methionine = N(6)-dimethyladenosine(1518)/N(6)-dimethyladenosine(1519) in 16S rRNA + 4 S-adenosyl-L-homocysteine + 4 H(+). Functionally, specifically dimethylates two adjacent adenosines (A1518 and A1519) in the loop of a conserved hairpin near the 3'-end of 16S rRNA in the 30S particle. May play a critical role in biogenesis of 30S subunits. The sequence is that of Ribosomal RNA small subunit methyltransferase A from Acidithiobacillus ferrooxidans (strain ATCC 23270 / DSM 14882 / CIP 104768 / NCIMB 8455) (Ferrobacillus ferrooxidans (strain ATCC 23270)).